We begin with the raw amino-acid sequence, 311 residues long: Telomere-binding protein I1 homolog (311 aa).

Belongs to the chordopoxvirinae I1 family.

The protein localises to the virion. Its function is as follows. Late DNA-binding protein which binds to the hairpin form of the viral telomeric sequence. Required for the production of mature virions (MV). The sequence is that of Telomere-binding protein I1 homolog from Fowlpox virus (strain NVSL) (FPV).